Consider the following 147-residue polypeptide: Large ribosomal subunit protein uL13 (147 aa).

It belongs to the universal ribosomal protein uL13 family. Part of the 50S ribosomal subunit.

This protein is one of the early assembly proteins of the 50S ribosomal subunit, although it is not seen to bind rRNA by itself. It is important during the early stages of 50S assembly. In Paenarthrobacter aurescens (strain TC1), this protein is Large ribosomal subunit protein uL13.